Here is a 66-residue protein sequence, read N- to C-terminus: Large ribosomal subunit protein bL31 (66 aa).

Zn(2+) is bound by residues cysteine 16, cysteine 18, cysteine 36, and cysteine 39.

It belongs to the bacterial ribosomal protein bL31 family. Type A subfamily. In terms of assembly, part of the 50S ribosomal subunit. It depends on Zn(2+) as a cofactor.

Binds the 23S rRNA. The polypeptide is Large ribosomal subunit protein bL31 (Priestia megaterium (Bacillus megaterium)).